We begin with the raw amino-acid sequence, 320 residues long: Rhomboid-like protein 17, chloroplastic (320 aa).

A chloroplast-targeting transit peptide spans 1–87 (MHAIFSSFSR…LKFGNVMESR (87 aa)). A run of 5 helical transmembrane segments spans residues 116–136 (WING…AVFT), 160–180 (LITS…MIGI), 199–219 (LYFA…ALLA), 247–267 (MFAI…YFAL), and 295–315 (IASS…WARI).

Belongs to the peptidase S54 family.

It is found in the plastid. The protein localises to the chloroplast membrane. In terms of biological role, probable rhomboid-type serine protease that catalyzes intramembrane proteolysis. This Arabidopsis thaliana (Mouse-ear cress) protein is Rhomboid-like protein 17, chloroplastic.